We begin with the raw amino-acid sequence, 304 residues long: Protein phosphatase PTC7 homolog (304 aa).

The N-terminal 68 residues, 1-68 (MFSVLSYGRL…GDDACFVARH (68 aa)), are a transit peptide targeting the mitochondrion. The 231-residue stretch at 69-299 (RSADVLGVAD…DDITVLLSIV (231 aa)) folds into the PPM-type phosphatase domain. Mn(2+) contacts are provided by aspartate 78, glycine 79, and aspartate 223.

It belongs to the PP2C family. As to quaternary structure, interacts with FBXL4, BNIP3 and NIX; these interactions are important for ubiquitination and degradation of BNIP3 and NIX. Requires Mg(2+) as cofactor. The cofactor is Mn(2+). In terms of tissue distribution, expressed in keratinocytes (at protein level).

The protein resides in the mitochondrion matrix. The enzyme catalyses O-phospho-L-seryl-[protein] + H2O = L-seryl-[protein] + phosphate. It catalyses the reaction O-phospho-L-threonyl-[protein] + H2O = L-threonyl-[protein] + phosphate. With respect to regulation, inhibited by sodium orthovanadate. Functionally, protein phosphatase that plays an essential role in mitochondrial metabolism and biogenesis. Positively regulates biosynthesis of the ubiquinone, coenzyme Q. Dephosphorylates the ubiquinone biosynthesis protein COQ7 which is likely to lead to its activation. Serves as a crucial sensor for mitophagy, though the underlying mechanism remains ambiguous. May dephosphorylate BNIP3 and NIX and thereby directly regulates mitophagy receptor function and stability. Alternatively, promotes SCF-FBXL4-dependent ubiquitination and degradation of BNIP3 and NIX independently of its catalytic activity to restrain mitophagy. This is Protein phosphatase PTC7 homolog (PPTC7) from Homo sapiens (Human).